The primary structure comprises 337 residues: Glyceraldehyde-3-phosphate dehydrogenase (337 aa).

Residues 12 to 13 (RI), Asp34, and Arg79 contribute to the NAD(+) site. Residues 150–152 (SCT), Thr181, 210–211 (TG), and Arg233 contribute to the D-glyceraldehyde 3-phosphate site. Catalysis depends on Cys151, which acts as the Nucleophile. Asn315 serves as a coordination point for NAD(+).

Belongs to the glyceraldehyde-3-phosphate dehydrogenase family. Homotetramer.

It is found in the cytoplasm. It carries out the reaction D-glyceraldehyde 3-phosphate + phosphate + NAD(+) = (2R)-3-phospho-glyceroyl phosphate + NADH + H(+). Its pathway is carbohydrate degradation; glycolysis; pyruvate from D-glyceraldehyde 3-phosphate: step 1/5. This Omphalotus olearius (Jack o'lantern) protein is Glyceraldehyde-3-phosphate dehydrogenase (GPD).